The primary structure comprises 87 residues: Beta-toxin Cn5 (87 aa).

The signal sequence occupies residues 1 to 19 (MNSLLMITACLFLIGTVWA). The region spanning 20–85 (KEGYLVNKST…TYPLPNKSCS (66 aa)) is the LCN-type CS-alpha/beta domain. 4 disulfides stabilise this stretch: Cys31-Cys84, Cys35-Cys60, Cys44-Cys65, and Cys48-Cys67.

Belongs to the long (4 C-C) scorpion toxin superfamily. Sodium channel inhibitor family. Beta subfamily. As to expression, expressed by the venom gland.

It localises to the secreted. In terms of biological role, beta toxins bind voltage-independently at site-4 of sodium channels (Nav) and shift the voltage of activation toward more negative potentials thereby affecting sodium channel activation and promoting spontaneous and repetitive firing. This toxin is lethal to crustaceans (freshwater crayfish (Cambarellus montezumae spp.)), it provokes a reversible paralysis to insects (crickets (Achaeta spp.)), but is not toxic to mice. At high concentrations, it does displace the (beta) mammal-specific toxin Cn2 from rat brain synaptosomes. The protein is Beta-toxin Cn5 of Centruroides noxius (Mexican scorpion).